The chain runs to 148 residues: Ergosterol biosynthetic protein 28 (148 aa).

Residues 1–25 (MFSLQDVITTTKTTLAAMPKGYLPK) are Cytoplasmic-facing. A helical membrane pass occupies residues 26–46 (WLLFISIVSVFNSIQTYVSGL). The Lumenal segment spans residues 47–92 (ELTRKVYERKPTETTHLSARTFGTWTFISCVIRFYGAMYLNEPHIF). A helical transmembrane segment spans residues 93-113 (ELVFMSYMVALFHFGSELLIF). The Cytoplasmic segment spans residues 114 to 120 (RTCKLGK). The helical transmembrane segment at 121-136 (GFMGPLVVSTTSLVWM) threads the bilayer. The Lumenal portion of the chain corresponds to 137-148 (YKQREYYTGVAW).

It belongs to the ERG28 family. Heterotetramer of ERG25, ERG26, ERG27 and ERG28. ERG28 acts as a scaffold to tether ERG27 and other 4,4-demethylation-related enzymes, forming a demethylation enzyme complex, in the endoplasmic reticulum. Interacts with ERG25, ERG26 and ERG27. Also interacts with ERG1, ERG3, ERG5, ERG6 and ERG11.

It localises to the endoplasmic reticulum membrane. Functionally, part of the third module of ergosterol biosynthesis pathway that includes the late steps of the pathway. ERG28 has a role as a scaffold to help anchor the catalytic components of the C-4 demethylation complex ERG25, ERG26 and ERG27 to the endoplasmic reticulum. The third module or late pathway involves the ergosterol synthesis itself through consecutive reactions that mainly occur in the endoplasmic reticulum (ER) membrane. Firstly, the squalene synthase ERG9 catalyzes the condensation of 2 farnesyl pyrophosphate moieties to form squalene, which is the precursor of all steroids. Squalene synthase is crucial for balancing the incorporation of farnesyl diphosphate (FPP) into sterol and nonsterol isoprene synthesis. Secondly, the squalene epoxidase ERG1 catalyzes the stereospecific oxidation of squalene to (S)-2,3-epoxysqualene, which is considered to be a rate-limiting enzyme in steroid biosynthesis. Then, the lanosterol synthase ERG7 catalyzes the cyclization of (S)-2,3 oxidosqualene to lanosterol, a reaction that forms the sterol core. In the next steps, lanosterol is transformed to zymosterol through a complex process involving various demethylation, reduction and desaturation reactions. The lanosterol 14-alpha-demethylase ERG11 (also known as CYP51) catalyzes C14-demethylation of lanosterol to produce 4,4'-dimethyl cholesta-8,14,24-triene-3-beta-ol, which is critical for ergosterol biosynthesis. The C-14 reductase ERG24 reduces the C14=C15 double bond of 4,4-dimethyl-cholesta-8,14,24-trienol to produce 4,4-dimethyl-cholesta-8,24-dienol. 4,4-dimethyl-cholesta-8,24-dienol is substrate of the C-4 demethylation complex ERG25-ERG26-ERG27 in which ERG25 catalyzes the three-step monooxygenation required for the demethylation of 4,4-dimethyl and 4alpha-methylsterols, ERG26 catalyzes the oxidative decarboxylation that results in a reduction of the 3-beta-hydroxy group at the C-3 carbon to an oxo group, and ERG27 is responsible for the reduction of the keto group on the C-3. ERG28 has a role as a scaffold to help anchor ERG25, ERG26 and ERG27 to the endoplasmic reticulum and ERG29 regulates the activity of the iron-containing C4-methylsterol oxidase ERG25. Then, the sterol 24-C-methyltransferase ERG6 catalyzes the methyl transfer from S-adenosyl-methionine to the C-24 of zymosterol to form fecosterol. The C-8 sterol isomerase ERG2 catalyzes the reaction which results in unsaturation at C-7 in the B ring of sterols and thus converts fecosterol to episterol. The sterol-C5-desaturase ERG3 then catalyzes the introduction of a C-5 double bond in the B ring to produce 5-dehydroepisterol. The C-22 sterol desaturase ERG5 further converts 5-dehydroepisterol into ergosta-5,7,22,24(28)-tetraen-3beta-ol by forming the C-22(23) double bond in the sterol side chain. Finally, ergosta-5,7,22,24(28)-tetraen-3beta-ol is substrate of the C-24(28) sterol reductase ERG4 to produce ergosterol. The protein is Ergosterol biosynthetic protein 28 of Saccharomyces cerevisiae (strain ATCC 204508 / S288c) (Baker's yeast).